Here is a 1161-residue protein sequence, read N- to C-terminus: Immunoglobulin superfamily member 3 (1161 aa).

A signal peptide spans 1 to 16; that stretch reads MGTAALLILLAGVSWA. At 17–1091 the chain is on the extracellular side; it reads QREVAIQPGP…LQSTICANDA (1075 aa). Ig-like C2-type domains lie at 18–135, 140–258, 272–382, 402–523, 541–651, 674–796, 806–930, and 947–1063; these read REVA…AKVN, PDTL…WFPL, PTDK…RGPS, PLRT…WQLL, FAVT…RETS, PRLQ…EETS, PDAN…WYRR, and PQLQ…WYLL. 2 disulfides stabilise this stretch: cysteine 39-cysteine 117 and cysteine 164-cysteine 242. The short motif at 246 to 248 is the EWI motif element; it reads EWI. Intrachain disulfides connect cysteine 298–cysteine 372, cysteine 428–cysteine 507, cysteine 562–cysteine 641, cysteine 697–cysteine 775, cysteine 831–cysteine 914, and cysteine 970–cysteine 1047. Residues 1092–1112 traverse the membrane as a helical segment; the sequence is LFYLVFFYPFPIFGILIITIL. At 1113 to 1161 the chain is on the cytoplasmic side; sequence LVRFRHRPTGKPGEGKNGVPLLWIKEPHLNYSPTCLEPPVLSIHPGTID.

It is found in the membrane. In Xenopus tropicalis (Western clawed frog), this protein is Immunoglobulin superfamily member 3 (igsf3).